The chain runs to 555 residues: CTP synthase (555 aa).

Residues 1-272 (MQPTSTTTKH…DAYVVRKLDL (272 aa)) are amidoligase domain. Ser19 is a binding site for CTP. Residue Ser19 participates in UTP binding. ATP contacts are provided by residues 20 to 25 (SLGKGL) and Asp77. Mg(2+) contacts are provided by Asp77 and Glu146. CTP contacts are provided by residues 153 to 155 (DIE), 193 to 198 (KTKPTQ), and Lys229. Residues 193–198 (KTKPTQ) and Lys229 contribute to the UTP site. Residues 297–548 (TVALVGKYID…VKAAVARQVA (252 aa)) form the Glutamine amidotransferase type-1 domain. An L-glutamine-binding site is contributed by Gly360. The active-site Nucleophile; for glutamine hydrolysis is the Cys387. L-glutamine contacts are provided by residues 388–391 (LGLQ), Glu411, and Arg473. Active-site residues include His521 and Glu523.

This sequence belongs to the CTP synthase family. In terms of assembly, homotetramer.

The enzyme catalyses UTP + L-glutamine + ATP + H2O = CTP + L-glutamate + ADP + phosphate + 2 H(+). It catalyses the reaction L-glutamine + H2O = L-glutamate + NH4(+). It carries out the reaction UTP + NH4(+) + ATP = CTP + ADP + phosphate + 2 H(+). It participates in pyrimidine metabolism; CTP biosynthesis via de novo pathway; CTP from UDP: step 2/2. Its activity is regulated as follows. Allosterically activated by GTP, when glutamine is the substrate; GTP has no effect on the reaction when ammonia is the substrate. The allosteric effector GTP functions by stabilizing the protein conformation that binds the tetrahedral intermediate(s) formed during glutamine hydrolysis. Inhibited by the product CTP, via allosteric rather than competitive inhibition. Functionally, catalyzes the ATP-dependent amination of UTP to CTP with either L-glutamine or ammonia as the source of nitrogen. Regulates intracellular CTP levels through interactions with the four ribonucleotide triphosphates. The polypeptide is CTP synthase (Streptomyces griseus subsp. griseus (strain JCM 4626 / CBS 651.72 / NBRC 13350 / KCC S-0626 / ISP 5235)).